A 247-amino-acid chain; its full sequence is Agamous-like MADS-box protein AGL28 (247 aa).

An MADS-box domain is found at 6-66; it reads LGRRKIELVK…GKAYSFGHPN (61 aa). Residues 91–168 adopt a coiled-coil conformation; sequence TKLRIQMLNE…VDEKVAQLHH (78 aa).

In terms of tissue distribution, expressed in roots, leaves and shoot apices.

It is found in the nucleus. Functionally, probable transcription factor that may function as a floral promoter operating upstream of known floral activators in the autonomous pathway. This Arabidopsis thaliana (Mouse-ear cress) protein is Agamous-like MADS-box protein AGL28.